Reading from the N-terminus, the 737-residue chain is Delta and Notch-like epidermal growth factor-related receptor (737 aa).

The N-terminal stretch at 1-25 (MPPRRAQAPGAPLLPVLALLPLLLG) is a signal peptide. At 26–640 (AGPQSGCLAS…LTNMPRHSLY (615 aa)) the chain is on the extracellular side. 2 consecutive EGF-like domains span residues 44 to 92 (APGP…TYCQ) and 94 to 133 (VADP…LNCE). The interval 44–133 (APGPCASQPC…NDGYEGLNCE (90 aa)) is interaction with NOTCH1. Intrachain disulfides connect C48-C59, C53-C80, C82-C91, C98-C108, C103-C121, and C123-C132. An N-linked (GlcNAc...) asparagine glycan is attached at N204. 5 consecutive EGF-like domains span residues 309–348 (PGDS…TFCE), 349–390 (EFDA…ELCQ), 392–428 (KIDY…SACE), 430–466 (KVDP…PTCA), and 468–503 (LVDF…LYCE). Cystine bridges form between C319-C336, C338-C347, C353-C364, C358-C378, C380-C389, C396-C407, C401-C416, C418-C427, C434-C445, C439-C454, C456-C465, C472-C482, C477-C491, C493-C502, C509-C520, C514-C529, C531-C540, C547-C558, C552-C567, C569-C578, C585-C596, C590-C605, and C607-C616. In terms of domain architecture, EGF-like 8; calcium-binding spans 505–541 (EYNECLSAPCLNAATCRDLINGYECVCLAEYKGTHCE). The EGF-like 9 domain occupies 543–579 (YKDPCANISCLNGGTCDSEGLNGTCICAPGFTGEECD). The N-linked (GlcNAc...) asparagine glycan is linked to N564. Positions 581–617 (DINECDSNPCHHAGTCLDQPNGYTCHCPHGWVGANCE) constitute an EGF-like 10; calcium-binding domain. Residues 641–661 (IIIGALCVAFILMLIILIVGI) form a helical membrane-spanning segment. The Cytoplasmic portion of the chain corresponds to 662-737 (CRISRIEYQG…LVTLIKTKDL (76 aa)). Residues 677–680 (YEEF) form an interaction with AP1G1 and somatodendritic targeting region. Residue S685 is modified to Phosphoserine. Y711 bears the Phosphotyrosine mark. A Phosphothreonine modification is found at T714. Y721 bears the Phosphotyrosine mark. Phosphoserine is present on S722.

As to quaternary structure, interacts with AP1G1. Interacts with NOTCH1. Post-translationally, N-glycosylated. In terms of tissue distribution, specifically expressed in brain neurons (at protein level).

The protein resides in the cell membrane. Functionally, mediates neuron-glia interaction during astrocytogenesis. May promote differentiation of Bergmann glia during cerebellar development by activating DELTEX-dependent NOTCH1 signaling. The sequence is that of Delta and Notch-like epidermal growth factor-related receptor (Dner) from Mus musculus (Mouse).